The following is a 208-amino-acid chain: Thymidylate kinase (208 aa).

ATP is bound at residue 10-17; that stretch reads GPEGSGKT.

The protein belongs to the thymidylate kinase family.

It carries out the reaction dTMP + ATP = dTDP + ADP. Functionally, phosphorylation of dTMP to form dTDP in both de novo and salvage pathways of dTTP synthesis. The protein is Thymidylate kinase of Bacillus cereus (strain ATCC 10987 / NRS 248).